We begin with the raw amino-acid sequence, 281 residues long: Sulfur carrier protein FdhD (281 aa).

Catalysis depends on cysteine 117, which acts as the Cysteine persulfide intermediate.

It belongs to the FdhD family.

It is found in the cytoplasm. In terms of biological role, required for formate dehydrogenase (FDH) activity. Acts as a sulfur carrier protein that transfers sulfur from IscS to the molybdenum cofactor prior to its insertion into FDH. This is Sulfur carrier protein FdhD from Xanthomonas oryzae pv. oryzae (strain MAFF 311018).